The primary structure comprises 295 residues: Glutamyl-Q tRNA(Asp) synthetase (295 aa).

L-glutamate contacts are provided by residues 9 to 13 (RFAPT) and Glu45. Residues 12 to 22 (PTPSGFLHFGS) carry the 'HIGH' region motif. Cys101, Cys103, Tyr115, and Cys119 together coordinate Zn(2+). Tyr172 and Arg190 together coordinate L-glutamate. A 'KMSKS' region motif is present at residues 228 to 232 (KLGKS). Lys231 contributes to the ATP binding site.

Belongs to the class-I aminoacyl-tRNA synthetase family. GluQ subfamily. Requires Zn(2+) as cofactor.

In terms of biological role, catalyzes the tRNA-independent activation of glutamate in presence of ATP and the subsequent transfer of glutamate onto a tRNA(Asp). Glutamate is transferred on the 2-amino-5-(4,5-dihydroxy-2-cyclopenten-1-yl) moiety of the queuosine in the wobble position of the QUC anticodon. The chain is Glutamyl-Q tRNA(Asp) synthetase from Pseudomonas putida (strain W619).